The primary structure comprises 343 residues: Mesaconyl-CoA hydratase (343 aa).

The 70-residue stretch at 47 to 116 (SDEFARACGL…STVIGLKENS (70 aa)) folds into the MaoC-like domain. Substrate contacts are provided by residues 60–63 (PVDE), 83–86 (VANL), and 94–96 (LKP).

The enzyme catalyses (2R,3S)-beta-methylmalyl-CoA = 2-methylfumaryl-CoA + H2O. In terms of biological role, involved in the ethylmalonyl-CoA pathway for acetate assimilation. Catalyzes the reversible hydration of mesaconyl-CoA (2-methylfumaryl-CoA) to yield beta-methylmalyl-CoA ((2R,3S)-beta-methylmalyl-CoA). The polypeptide is Mesaconyl-CoA hydratase (mch) (Cereibacter sphaeroides (strain ATCC 17023 / DSM 158 / JCM 6121 / CCUG 31486 / LMG 2827 / NBRC 12203 / NCIMB 8253 / ATH 2.4.1.) (Rhodobacter sphaeroides)).